The chain runs to 195 residues: Interferon tau-9 (195 aa).

The signal sequence occupies residues Met1 to Gly23. Intrachain disulfides connect Cys24–Cys122 and Cys52–Cys162.

The protein belongs to the alpha/beta interferon family. IFN-alphaII subfamily. Constitutively and exclusively expressed in the mononuclear cells of the extraembryonic trophectoderm.

It localises to the secreted. In terms of biological role, paracrine hormone primarily responsible for maternal recognition of pregnancy. Interacts with endometrial receptors, probably type I interferon receptors, and blocks estrogen receptor expression, preventing the estrogen-induced increase in oxytocin receptor expression in the endometrium. This results in the suppression of the pulsatile endometrial release of the luteolytic hormone prostaglandin F2-alpha, hindering the regression of the corpus luteum (luteolysis) and therefore a return to ovarian cyclicity. This, and a possible direct effect of IFN-tau on prostaglandin synthesis, leads in turn to continued ovarian progesterone secretion, which stimulates the secretion by the endometrium of the nutrients required for the growth of the conceptus. In summary, displays particularly high antiviral and antiproliferative potency concurrently with particular weak cytotoxicity, high antiluteolytic activity and immunomodulatory properties. In contrast with other IFNs, IFN-tau is not virally inducible. This chain is Interferon tau-9 (IFNT9), found in Ovis aries (Sheep).